A 226-amino-acid polypeptide reads, in one-letter code: Glutathione peroxidase 3 (226 aa).

The signal sequence occupies residues 1-24 (MARLLQASCLLSLLLAGFLPQSRG). Sec-73 is an active-site residue. Residue Sec-73 is a non-standard amino acid, selenocysteine.

Belongs to the glutathione peroxidase family. Homotetramer. As to expression, secreted in plasma.

It localises to the secreted. The enzyme catalyses 2 glutathione + H2O2 = glutathione disulfide + 2 H2O. It carries out the reaction tert-butyl hydroperoxide + 2 glutathione = tert-butanol + glutathione disulfide + H2O. In terms of biological role, protects cells and enzymes from oxidative damage, by catalyzing the reduction of hydrogen peroxide, lipid peroxides and organic hydroperoxide, by glutathione. The chain is Glutathione peroxidase 3 from Sapajus apella (Brown-capped capuchin).